Reading from the N-terminus, the 376-residue chain is Alpha-2,8-sialyltransferase 8E (376 aa).

The helical transmembrane segment at 17–37 threads the bilayer; that stretch reads TLLFIFICAFALVTLLQQILY. Asparagine 56 is a glycosylation site (N-linked (GlcNAc...) asparagine). Intrachain disulfides connect cysteine 164–cysteine 313 and cysteine 178–cysteine 373. Substrate is bound by residues asparagine 192 and 214 to 216; that span reads NPS. An N-linked (GlcNAc...) asparagine glycan is attached at asparagine 241. A substrate-binding site is contributed by 300-302; that stretch reads STG. Residue histidine 348 is the Proton donor/acceptor of the active site.

This sequence belongs to the glycosyltransferase 29 family. Expressed in liver.

It localises to the golgi apparatus membrane. The enzyme catalyses a ganglioside GT1b (d18:1(4E)) + CMP-N-acetyl-beta-neuraminate = a ganglioside GQ1b (d18:1(4E)) + CMP + H(+). It catalyses the reaction a ganglioside GQ1c (d18:1(4E)) + CMP-N-acetyl-beta-neuraminate = a ganglioside GP1c (d18:1(4E)) + CMP + H(+). It carries out the reaction a ganglioside GD3 (d18:1(4E)) + CMP-N-acetyl-beta-neuraminate = a ganglioside GT3 (d18:1(4E)) + CMP + H(+). The catalysed reaction is a ganglioside GD1a (d18:1(4E)) + CMP-N-acetyl-beta-neuraminate = a ganglioside GT1a (d18:1(4E)) + CMP + H(+). The enzyme catalyses a ganglioside GM1b (d18:1(4E)) + CMP-N-acetyl-beta-neuraminate = a ganglioside GD1c (d18:1(4E)) + CMP + H(+). It functions in the pathway protein modification; protein glycosylation. Its function is as follows. Involved in the synthesis of gangliosides GD1c, GT1a, GQ1b, GP1c and GT3 from GD1a, GT1b, GM1b and GD3 respectively. This chain is Alpha-2,8-sialyltransferase 8E, found in Rattus norvegicus (Rat).